The primary structure comprises 913 residues: Proline and serine-rich protein 1 (913 aa).

Met-1 bears the N-acetylmethionine mark. 4 disordered regions span residues 233-291, 488-507, 592-618, and 888-913; these read VPPP…PAVS, ASLSSLPNRNSDSPASATNK, SEPTSPPPSAFKGPAHPGTPVRGTLGL, and DGFPSYPSTPGTPFSLQTGLSQSGWQ. A compositionally biased stretch (polar residues) spans 251-275; it reads LSSQSKPTQSQTFSTPASQLFSPHG. Positions 276–291 are enriched in low complexity; sequence SSNPSTPAATPVPAVS. Residues 488–506 show a composition bias toward polar residues; it reads ASLSSLPNRNSDSPASATN. Residues 893–913 are compositionally biased toward polar residues; sequence YPSTPGTPFSLQTGLSQSGWQ.

In terms of assembly, interacts with TET2 and OGT; this interaction mediates TET2 O-GlcNAcylation and stability by promoting the interaction between OGT and TET2. Interacts with KDM6A. Interacts with TET1. Post-translationally, glycosylated. Interaction with OGT leads to GlcNAcylation.

Its function is as follows. Mediates OGT interaction with and O-GlcNAcylation of TET2 to control TET2 stabilization at enhancers and CpG islands (CGIs). This is Proline and serine-rich protein 1 from Mus musculus (Mouse).